Reading from the N-terminus, the 2120-residue chain is Separin (2120 aa).

A Phosphoserine modification is found at Ser1126. The tract at residues 1299-1355 (IKSVPGSEPSKTQGQKRSGRGRQKLASAPLRLNNTSQKGLEGRGLPCTPKPPDRIRQ) is disordered. 2 positions are modified to phosphoserine: Ser1396 and Ser1399. Disordered stretches follow at residues 1412 to 1485 (AEEP…PEIM) and 1507 to 1561 (GSDG…PRLR). Basic residues-rich tracts occupy residues 1418–1432 (RGTA…RKGL) and 1454–1463 (RSRRAKKVAS). Positions 1464-1473 (RHCEERRPQR) are enriched in basic and acidic residues. Ser1508 carries the post-translational modification Phosphoserine. Over residues 1548 to 1558 (PDKESDKDLGP) the composition is skewed to basic and acidic residues. The 96-residue stretch at 1945–2040 (PRSTFYVLNP…SAALAVRGNL (96 aa)) folds into the Peptidase C50 domain. The active site involves Cys2029.

In terms of assembly, interacts with PTTG1. Interacts with RAD21. Post-translationally, autocleaves. This function, which is not essential for its protease activity, is unknown. Phosphorylated by CDK1. There are 8 Ser/Thr phosphorylation sites. Among them, Ser-1126 phosphorylation is the major site, which conducts to the enzyme inactivation.

The protein resides in the cytoplasm. The protein localises to the nucleus. The enzyme catalyses All bonds known to be hydrolyzed by this endopeptidase have arginine in P1 and an acidic residue in P4. P6 is often occupied by an acidic residue or by a hydroxy-amino-acid residue, the phosphorylation of which enhances cleavage.. Its activity is regulated as follows. Regulated by at least two independent mechanisms. First, it is inactivated via its interaction with securin/PTTG1, which probably covers its active site. The association with PTTG1 is not only inhibitory, since PTTG1 is also required for activating it, the enzyme being inactive in cells in which PTTG1 is absent. PTTG1 degradation at anaphase, liberates it and triggers RAD21 cleavage. Second, phosphorylation at Ser-1126 inactivates it. The complete phosphorylation during mitosis, is removed when cells undergo anaphase. Activation of the enzyme at the metaphase-anaphase transition probably requires the removal of both securin and inhibitory phosphate. Caspase-like protease, which plays a central role in the chromosome segregation by cleaving the SCC1/RAD21 subunit of the cohesin complex at the onset of anaphase. During most of the cell cycle, it is inactivated by different mechanisms. The chain is Separin (ESPL1) from Homo sapiens (Human).